Consider the following 101-residue polypeptide: Transcription and mRNA export factor SUS1 (101 aa).

It belongs to the ENY2 family. Component of the nuclear pore complex (NPC)-associated TREX-2 complex (transcription and export complex 2), composed of at least SUS1, SAC3, THP1, SEM1, and CDC31. TREX-2 contains 2 SUS1 chains. The TREX-2 complex interacts with the nucleoporin NUP1. Component of the 1.8 MDa SAGA transcription coactivator-HAT complex. SAGA is built of 5 distinct domains with specialized functions. Within the SAGA complex, SUS1, SGF11, SGF73 and UBP8 form an additional subcomplex of SAGA called the DUB module (deubiquitination module). Interacts directly with THP1, SAC3, SGF11, and with the RNA polymerase II.

The protein localises to the nucleus. Its subcellular location is the nucleoplasm. It is found in the cytoplasm. The protein resides in the P-body. Functionally, involved in mRNA export coupled transcription activation by association with both the TREX-2 and the SAGA complexes. At the promoters, SAGA is required for recruitment of the basal transcription machinery. It influences RNA polymerase II transcriptional activity through different activities such as TBP interaction and promoter selectivity, interaction with transcription activators, and chromatin modification through histone acetylation and deubiquitination. Within the SAGA complex, participates in a subcomplex required for deubiquitination of H2B and for the maintenance of steady-state H3 methylation levels. The TREX-2 complex functions in docking export-competent ribonucleoprotein particles (mRNPs) to the nuclear entrance of the nuclear pore complex (nuclear basket). TREX-2 participates in mRNA export and accurate chromatin positioning in the nucleus by tethering genes to the nuclear periphery. May also be involved in cytoplasmic mRNA decay by interaction with components of P-bodies. This Debaryomyces hansenii (strain ATCC 36239 / CBS 767 / BCRC 21394 / JCM 1990 / NBRC 0083 / IGC 2968) (Yeast) protein is Transcription and mRNA export factor SUS1.